The chain runs to 231 residues: Female protein (231 aa).

Residues 1–19 (MDKMLLLLGVSILLSEVFA) form the signal peptide. One can recognise a Pentraxin (PTX) domain in the interval 24–223 (TGKVFVFPRE…YAVIRPRCVA (200 aa)). A glycan (N-linked (GlcNAc...) asparagine) is linked at asparagine 51. Residues cysteine 55 and cysteine 114 are joined by a disulfide bond. Ca(2+) contacts are provided by aspartate 77, asparagine 78, glutamate 155, glutamine 156, aspartate 157, and glutamine 167.

Belongs to the pentraxin family. As to quaternary structure, homopentamer. Pentraxin (or pentaxin) have a discoid arrangement of 5 non-covalently bound subunits. It depends on Ca(2+) as a cofactor.

It is found in the secreted. The protein is Female protein of Nothocricetulus migratorius (Gray dwarf hamster).